The primary structure comprises 338 residues: Ketol-acid reductoisomerase (NADP(+)) (338 aa).

Positions 3-183 (IELLYDADAD…GGARAGVIPT (181 aa)) constitute a KARI N-terminal Rossmann domain. NADP(+)-binding positions include 26-29 (YGSQ), Arg-49, Ser-52, Ser-54, and 84-87 (DTSQ). The active site involves His-109. Gly-135 provides a ligand contact to NADP(+). The KARI C-terminal knotted domain maps to 184–329 (TFEAETVTDL…AKLRDLMSWV (146 aa)). Mg(2+) contacts are provided by Asp-192, Glu-196, Glu-228, and Glu-232. Ser-253 lines the substrate pocket.

This sequence belongs to the ketol-acid reductoisomerase family. It depends on Mg(2+) as a cofactor.

The catalysed reaction is (2R)-2,3-dihydroxy-3-methylbutanoate + NADP(+) = (2S)-2-acetolactate + NADPH + H(+). It catalyses the reaction (2R,3R)-2,3-dihydroxy-3-methylpentanoate + NADP(+) = (S)-2-ethyl-2-hydroxy-3-oxobutanoate + NADPH + H(+). Its pathway is amino-acid biosynthesis; L-isoleucine biosynthesis; L-isoleucine from 2-oxobutanoate: step 2/4. It functions in the pathway amino-acid biosynthesis; L-valine biosynthesis; L-valine from pyruvate: step 2/4. Functionally, involved in the biosynthesis of branched-chain amino acids (BCAA). Catalyzes an alkyl-migration followed by a ketol-acid reduction of (S)-2-acetolactate (S2AL) to yield (R)-2,3-dihydroxy-isovalerate. In the isomerase reaction, S2AL is rearranged via a Mg-dependent methyl migration to produce 3-hydroxy-3-methyl-2-ketobutyrate (HMKB). In the reductase reaction, this 2-ketoacid undergoes a metal-dependent reduction by NADPH to yield (R)-2,3-dihydroxy-isovalerate. The sequence is that of Ketol-acid reductoisomerase (NADP(+)) from Corynebacterium glutamicum (strain ATCC 13032 / DSM 20300 / JCM 1318 / BCRC 11384 / CCUG 27702 / LMG 3730 / NBRC 12168 / NCIMB 10025 / NRRL B-2784 / 534).